Here is a 348-residue protein sequence, read N- to C-terminus: Dihydroorotate dehydrogenase (quinone) (348 aa).

FMN contacts are provided by residues 60-64 and Thr84; that span reads AGFDK. A substrate-binding site is contributed by Lys64. Residue 109-113 coordinates substrate; that stretch reads NRLGF. Positions 138 and 169 each coordinate FMN. Residue Asn169 participates in substrate binding. The Nucleophile role is filled by Ser172. Asn174 serves as a coordination point for substrate. Lys207 and Ser235 together coordinate FMN. Residue 236-237 coordinates substrate; sequence NT. FMN is bound by residues Gly258, Gly287, and 308 to 309; that span reads YS.

Belongs to the dihydroorotate dehydrogenase family. Type 2 subfamily. In terms of assembly, monomer. It depends on FMN as a cofactor.

The protein localises to the cell membrane. It catalyses the reaction (S)-dihydroorotate + a quinone = orotate + a quinol. It participates in pyrimidine metabolism; UMP biosynthesis via de novo pathway; orotate from (S)-dihydroorotate (quinone route): step 1/1. In terms of biological role, catalyzes the conversion of dihydroorotate to orotate with quinone as electron acceptor. In Parvibaculum lavamentivorans (strain DS-1 / DSM 13023 / NCIMB 13966), this protein is Dihydroorotate dehydrogenase (quinone).